The chain runs to 397 residues: Transcription factor GATA-5 (397 aa).

The interval G48–Y116 is disordered. Positions P87–G101 are enriched in low complexity. The segment covering P102–D112 has biased composition (gly residues). 2 consecutive GATA-type zinc fingers follow at residues C189–C213 and C243–C267. Residues A281 to A356 are disordered. Residues T289–A298 show a composition bias toward basic residues. Low complexity predominate over residues A310–S335.

It localises to the nucleus. Functionally, transcription factor required during cardiovascular development. Plays an important role in the transcriptional program(s) that underlies smooth muscle cell diversity. Binds to the functionally important CEF-1 nuclear protein binding site in the cardiac-specific slow/cardiac troponin C transcriptional enhancer. This Homo sapiens (Human) protein is Transcription factor GATA-5.